Reading from the N-terminus, the 1892-residue chain is Protein TIC 214 (1892 aa).

6 consecutive transmembrane segments (helical) span residues 18-38 (IINS…FSIG), 64-84 (FITG…HLAL), 87-107 (PHTI…WNNH), 124-144 (LSIQ…HFIL), 172-192 (VGWL…LVWI), and 221-241 (IFSI…PSPI). 3 disordered regions span residues 250 to 300 (SKTE…EGWD), 794 to 814 (REEQ…ENKR), and 1581 to 1609 (RIQE…LGPV). Residues 256-268 (VESEEEKDVEIET) are compositionally biased toward acidic residues. Basic and acidic residues predominate over residues 1581 to 1602 (RIQEEKEPASQGEKERGSDIEN).

The protein belongs to the TIC214 family. Part of the Tic complex.

The protein resides in the plastid. It localises to the chloroplast inner membrane. Functionally, involved in protein precursor import into chloroplasts. May be part of an intermediate translocation complex acting as a protein-conducting channel at the inner envelope. In Nicotiana tomentosiformis (Tobacco), this protein is Protein TIC 214.